We begin with the raw amino-acid sequence, 210 residues long: Protein MSO1 (210 aa).

Met1 carries the N-acetylmethionine modification. Met2 bears the N-acetylserine mark. Residues 88-210 are disordered; the sequence is KHDMKKQNSR…LKRRNNDYGF (123 aa). Phosphoserine is present on Ser102. Polar residues predominate over residues 117-141; that stretch reads TPSSNGNTPEYTPASKSFQDIYNNH. Composition is skewed to low complexity over residues 142–161 and 172–183; these read TSSS…RPSA and SKTSNSFNTSST.

As to quaternary structure, interacts physically with SEC1.

Involved in secretion. Component of the secretory vesicle docking complex. The protein is Protein MSO1 (MSO1) of Saccharomyces cerevisiae (strain ATCC 204508 / S288c) (Baker's yeast).